Consider the following 852-residue polypeptide: MTGASRRSARGRIKSSSLSPGSDEGSAYPPSIRRGKGKELVSIGAFKTNLKILVGLIILGIIVIYFVINRLVRHGLLFDESQKPRVITPFPAPKVMDLSMFQGEHKESLYWGTYRPHVYFGVRARTPLSLVAGLMWLGVKDEMYVMRHFCENSDDLSTFGWREHNGRDYGRQELVENDMVIETSFVKSKGDGLGYGGDWAVRIDVKNKGLNDDVKRSAHLFFYLADEGGNVLNLGQDGLDFQGSSLLVSGSREDVGDWQIHLKSQNQLETHYSGFKTPHIYNLSDLVQQNLALQARKFGRLQLSDTSEDSSNIYIFQISGRLPFTIDIPFISGIKGESSNVEKRLTSLTGLPLSDLLKKKHQEFDAKFNECFKLSEKHDSETLGVGRTAIANMLGGIGYFYGQSKIYVPKSTQPGSRDNFLLYWPAELYTAVPSRPFFPRGFLWDEGFHQLLIWRWDIRITLDIVGHWLDLLNIDGWIPREQILGAEALSKVPEEFVVQYPSNGNPPTLFLVIRDLIDAIRMEKFVASEKDEVLSFLERASVRLDAWFQWFNTSQKGKEIGSYFWHGRDNTTTQELNPKTLSSGLDDYPRASHPSEDERHVDLRCWMYLAADCMHSITELLGKEDKLSKENYNSTVKLLSNFNLLNQMHYDSDYGAYFDFGNHTEKVKLIWKEVIQENGQLSRQLVRKTFGKPKLKLVPHLGYVSFFPFMSRIIPPDSPILEKQLDLISNRSILWSDYGLVSLAKTSSMYMKRNTEHDAPYWRGPIWMNMNYMILSSLYHYSIVDGPYREKSKAIYTELRSNLIRNVVRNYYETGYIWEQYDQVKGTGKGTRLFTGWSALTLLIMSEDYPIF.

The interval 1 to 31 (MTGASRRSARGRIKSSSLSPGSDEGSAYPPS) is disordered. The Cytoplasmic portion of the chain corresponds to 1 to 51 (MTGASRRSARGRIKSSSLSPGSDEGSAYPPSIRRGKGKELVSIGAFKTNLK). Positions 6–12 (RRSARGR) match the Endoplasmic reticulum targeting motif. Residues 15 to 26 (SSSLSPGSDEGS) show a composition bias toward low complexity. The chain crosses the membrane as a helical; Signal-anchor for type II membrane protein span at residues 52-72 (ILVGLIILGIIVIYFVINRLV). Over 73-852 (RHGLLFDESQ…LIMSEDYPIF (780 aa)) the chain is Lumenal. Residues 91–150 (PAPKVMDLSMFQGEHKESLYWGTYRPHVYFGVRARTPLSLVAGLMWLGVKDEMYVMRHFC) form a required for endoplasmic reticulum targeting region. N-linked (GlcNAc...) asparagine glycosylation is found at asparagine 282, asparagine 552, and asparagine 570. The segment covering 574-583 (QELNPKTLSS) has biased composition (polar residues). The interval 574–593 (QELNPKTLSSGLDDYPRASH) is disordered. The Proton donor role is filled by aspartate 586. Residues asparagine 633, asparagine 662, and asparagine 730 are each glycosylated (N-linked (GlcNAc...) asparagine). Glutamate 819 acts as the Proton acceptor in catalysis.

It belongs to the glycosyl hydrolase 63 family. In terms of tissue distribution, constitutively expressed in roots, stems, leaves, flowers and siliques.

It is found in the endoplasmic reticulum membrane. It carries out the reaction N(4)-(alpha-D-Glc-(1-&gt;2)-alpha-D-Glc-(1-&gt;3)-alpha-D-Glc-(1-&gt;3)-alpha-D-Man-(1-&gt;2)-alpha-D-Man-(1-&gt;2)-alpha-D-Man-(1-&gt;3)-[alpha-D-Man-(1-&gt;2)-alpha-D-Man-(1-&gt;3)-[alpha-D-Man-(1-&gt;2)-alpha-D-Man-(1-&gt;6)]-alpha-D-Man-(1-&gt;6)]-beta-D-Man-(1-&gt;4)-beta-D-GlcNAc-(1-&gt;4)-beta-D-GlcNAc)-L-asparaginyl-[protein] + H2O = N(4)-(alpha-D-Glc-(1-&gt;3)-alpha-D-Glc-(1-&gt;3)-alpha-D-Man-(1-&gt;2)-alpha-D-Man-(1-&gt;2)-alpha-D-Man-(1-&gt;3)-[alpha-D-Man-(1-&gt;2)-alpha-D-Man-(1-&gt;3)-[alpha-D-Man-(1-&gt;2)-alpha-D-Man-(1-&gt;6)]-alpha-D-Man-(1-&gt;6)]-beta-D-Man-(1-&gt;4)-beta-D-GlcNAc-(1-&gt;4)-beta-D-GlcNAc)-L-asparaginyl-[protein] + beta-D-glucose. Its pathway is glycan metabolism; N-glycan degradation. Its function is as follows. Cleaves the distal alpha 1,2-linked glucose residue from the Glc(3)Man(9)GlcNAc(2) oligosaccharide precursor. Required for the accumulation of seed storage proteins, the formation of protein bodies, cell differentiation, cellulose biosynthesis and organization (in cell walls), cell shape determination and organization (e.g. epidermal cells), and embryo development. Involved in root development. The protein is Mannosyl-oligosaccharide glucosidase GCS1 (GCS1) of Arabidopsis thaliana (Mouse-ear cress).